The chain runs to 458 residues: Sushi repeat-containing protein SRPX2 (458 aa).

The signal sequence occupies residues 1–18 (MEASITVLLFAFTKVASS). Sushi domains lie at 62 to 112 (ATCY…HCRR), 113 to 171 (IQCH…VCVD), and 255 to 314 (RRCP…TCTP). Intrachain disulfides connect C64/C98, C84/C110, C115/C156, and C142/C169. The 85-residue stretch at 170–254 (VDLDPPKIQC…SCKFIVKVQV (85 aa)) folds into the HYR domain. 2 disulfides stabilise this stretch: C257-C299 and C285-C312.

As to quaternary structure, forms homooligomers.

The protein localises to the secreted. Its subcellular location is the cytoplasm. It is found in the cell surface. It localises to the synapse. Functionally, may play a role in angiogenesis, synapse formation, cellular migration and adhesion. This is Sushi repeat-containing protein SRPX2 (srpx2) from Xenopus laevis (African clawed frog).